The chain runs to 198 residues: Holliday junction branch migration complex subunit RuvA (198 aa).

The tract at residues 1–63 (MYDYIKGQLT…EDAHLLFGFH (63 aa)) is domain I. Positions 64–142 (TEDEKDVFLK…EAPQETGHTK (79 aa)) are domain II. The flexible linker stretch occupies residues 143-147 (ARSNK). Residues 148–198 (AGNTQLDEAIEALLALGYKAKELKKIRAFFEGTSETAEQYIKSALKLLMKG) are domain III.

Belongs to the RuvA family. Homotetramer. Forms an RuvA(8)-RuvB(12)-Holliday junction (HJ) complex. HJ DNA is sandwiched between 2 RuvA tetramers; dsDNA enters through RuvA and exits via RuvB. An RuvB hexamer assembles on each DNA strand where it exits the tetramer. Each RuvB hexamer is contacted by two RuvA subunits (via domain III) on 2 adjacent RuvB subunits; this complex drives branch migration. In the full resolvosome a probable DNA-RuvA(4)-RuvB(12)-RuvC(2) complex forms which resolves the HJ.

It localises to the cytoplasm. In terms of biological role, the RuvA-RuvB-RuvC complex processes Holliday junction (HJ) DNA during genetic recombination and DNA repair, while the RuvA-RuvB complex plays an important role in the rescue of blocked DNA replication forks via replication fork reversal (RFR). RuvA specifically binds to HJ cruciform DNA, conferring on it an open structure. The RuvB hexamer acts as an ATP-dependent pump, pulling dsDNA into and through the RuvAB complex. HJ branch migration allows RuvC to scan DNA until it finds its consensus sequence, where it cleaves and resolves the cruciform DNA. The polypeptide is Holliday junction branch migration complex subunit RuvA (Streptococcus pyogenes serotype M1).